Here is a 424-residue protein sequence, read N- to C-terminus: 26S proteasome regulatory subunit 4 homolog (424 aa).

The segment covering Met1–Leu11 has biased composition (basic and acidic residues). Positions Met1–Lys33 are disordered. Gly210–Thr217 provides a ligand contact to ATP.

Belongs to the AAA ATPase family. As to quaternary structure, the 26S proteasome consists of a 20S proteasome core and two 19S regulatory subunits. The 20S proteasome core is composed of 28 subunits that are arranged in four stacked rings, resulting in a barrel-shaped structure. The two end rings are each formed by seven alpha subunits, and the two central rings are each formed by seven beta subunits. The catalytic chamber with the active sites is on the inside of the barrel.

It is found in the cytoplasm. It localises to the nucleus. Its function is as follows. Acts as a regulatory subunit of the 26S proteasome which degrades poly-ubiquitinated proteins in the cytoplasm and in the nucleus. It is essential for the regulated turnover of proteins and for the removal of misfolded proteins. The proteasome is a multicatalytic proteinase complex that is characterized by its ability to cleave peptides with Arg, Phe, Tyr, Leu, and Glu adjacent to the leaving group at neutral or slightly basic pH. This Encephalitozoon cuniculi (strain GB-M1) (Microsporidian parasite) protein is 26S proteasome regulatory subunit 4 homolog (RPT2).